The sequence spans 478 residues: UDP-glycosyltransferase 71B5 (478 aa).

UDP-alpha-D-glucose contacts are provided by residues S280, 347–349 (APQ), 364–372 (HCGWNSILE), and 386–389 (YAEQ).

Belongs to the UDP-glycosyltransferase family.

Its function is as follows. Possesses low quercetin 3-O-glucosyltransferase activity in vitro. The chain is UDP-glycosyltransferase 71B5 (UGT71B5) from Arabidopsis thaliana (Mouse-ear cress).